Reading from the N-terminus, the 437-residue chain is GTPase Obg (437 aa).

An Obg domain is found at 2–160; it reads SMFLDTAKIK…RNLELELKVL (159 aa). The region spanning 161-338 is the OBG-type G domain; the sequence is ADVGLVGFPS…LLEATAELLE (178 aa). Residues 167-174, 192-196, 214-217, 284-287, and 319-321 each bind GTP; these read GFPSVGKS, FTTIV, DLPG, NKMD, and SGI. Mg(2+) is bound by residues serine 174 and threonine 194. In terms of domain architecture, OCT spans 359–437; sequence GFNPDEPEFA…IGKFEFEFVD (79 aa).

Belongs to the TRAFAC class OBG-HflX-like GTPase superfamily. OBG GTPase family. Monomer. Requires Mg(2+) as cofactor.

The protein resides in the cytoplasm. Its function is as follows. An essential GTPase which binds GTP, GDP and possibly (p)ppGpp with moderate affinity, with high nucleotide exchange rates and a fairly low GTP hydrolysis rate. Plays a role in control of the cell cycle, stress response, ribosome biogenesis and in those bacteria that undergo differentiation, in morphogenesis control. The sequence is that of GTPase Obg from Streptococcus suis (strain 98HAH33).